Reading from the N-terminus, the 126-residue chain is Large ribosomal subunit protein bL12 (126 aa).

The protein belongs to the bacterial ribosomal protein bL12 family. In terms of assembly, homodimer. Part of the ribosomal stalk of the 50S ribosomal subunit. Forms a multimeric L10(L12)X complex, where L10 forms an elongated spine to which 2 to 4 L12 dimers bind in a sequential fashion. Binds GTP-bound translation factors.

Functionally, forms part of the ribosomal stalk which helps the ribosome interact with GTP-bound translation factors. Is thus essential for accurate translation. The sequence is that of Large ribosomal subunit protein bL12 from Acidovorax sp. (strain JS42).